We begin with the raw amino-acid sequence, 500 residues long: L-arabinose isomerase (500 aa).

The Mn(2+) site is built by glutamate 306, glutamate 333, histidine 350, and histidine 450.

This sequence belongs to the arabinose isomerase family. In terms of assembly, homohexamer. It depends on Mn(2+) as a cofactor.

The enzyme catalyses beta-L-arabinopyranose = L-ribulose. It functions in the pathway carbohydrate degradation; L-arabinose degradation via L-ribulose; D-xylulose 5-phosphate from L-arabinose (bacterial route): step 1/3. In terms of biological role, catalyzes the conversion of L-arabinose to L-ribulose. This is L-arabinose isomerase from Salmonella newport (strain SL254).